The primary structure comprises 481 residues: Cysteine--tRNA ligase (481 aa).

Residue Cys29 coordinates Zn(2+). A 'HIGH' region motif is present at residues 31–41; it reads PTVYDYSHLGH. The Zn(2+) site is built by Cys210, His235, and Glu239. Residues 272–276 carry the 'KMSKS' region motif; that stretch reads KMSKS. Lys275 contacts ATP.

Belongs to the class-I aminoacyl-tRNA synthetase family. Monomer. The cofactor is Zn(2+).

The protein localises to the cytoplasm. It catalyses the reaction tRNA(Cys) + L-cysteine + ATP = L-cysteinyl-tRNA(Cys) + AMP + diphosphate. In Anaeromyxobacter sp. (strain K), this protein is Cysteine--tRNA ligase.